The primary structure comprises 2829 residues: MAAASYDQLVKQVEALTMENTNLRQELEDNSNHLTKLETEATNMKEVLKQLQGSIEDEAMASSGPIDLLERFKDLNLDSSNIPAGKARPKMSMRSYGSREGSLSGHSGECSPVPVGSFQRRGLLNGSRESAGYMEELEKERLLLIAEHEKEEKEKRWYYAQLQNLTKRIDSLPLTENFSMQTDMTRRQLEYEARQIRAAMEEQLGTCQDMEKRVQTRVGKIHQIEEEILRIRQLLQSQVAEAAERTPQSKHDAGSRDAEKLPDGQGTSEITASGNVGSGQGSSSRADHDTTSVMSSNSTYSVPRRLTSHLGTKVEMVYSLLSMLGTHDKDDMSRTLLAMSSSQDSCIAMRQSGCLPLLIQLLHGNDKDSVLLGNSRGSKEARASGSAALDNIIHSQPDDKRGRREIRVLHLLEQIRAYCETCWEWQEAHEQGMDQDKNPMPAPVDHQICPAVCVLMKLSFDEEHRHAMNELGGLQAIAELLQVDCEMYGLINDHYSVTLRRYAGMALTNLTFGDVANKATLCSMKSCMRALVAQLKSESEDLQQVIASVLRNLSWRADVNSKKTLREVGSVKALMECALDVKKESTLKSVLSALWNLSAHCTENKADICSVDGALAFLVSTLTYRSQTNTLAIIESGGGILRNVSSLIATNEDHRQILRENNCLQTLLQHLKSHSLTIVSNACGTLWNLSARNAKDQEGLWDMGAVSMLKNLIHSKHKMIAMGSAAALRNLMANRPAKYKDANIMSPGSSVPSLHVRKQKALEAELDAQHLSETFDNIDNLSPKTTHRNKQRHKQNLCSEYALDSSRHDDSICRSDNFSIGNLTVLSPYINTTVLPGSSSPRPTMDGSRPEKDRERTAGLGNYHSTTESSGNSSKRIGIQLSTTAQISKVMDEVSNIHLVQENRSSGSASEMHCMSDERNSQRKPSSNHPQSNPFTFTKAESSTRGCPVAFMKMEYKMASNDSLNSVSSTEGYGKRGQVKPSVESYSEDDESKFFSYGQYPAGLAHKIQSANHMDDNDTELDTPINYSLKYSDEQLNSGRQSPTQNERWSRPKHIIDSEMKQSEQRQPRTTKTTYSSYTENKEEKHKKFPPHFNQSENVPAYTRSRGANNQVDQSRVSSNLSNNSKASKPHCQVDDYDDDKTTNFSERYSEEEQQEDETERQNKYNIKAYASEEHHGEQPIDYSRKYSTDVPSSAQKPSFPYSNNSSKQKPKKEQVSSNSNTPTPSPNSNRQNQLHPNSAQSRPGLNRPKQIPNKPPSINQETIQTYCVEDTPICFSRGSSLSSLSSAEDEIEGRERNSRGQESNNTLQITEPKEISAVSKDGAVNETRSSVHHTRTKNNRLQTSNISPSDSSRHKSVEFSSGAKSPSKSGAQTPKSPPEHYVQETPLMFSRCTSGSSLDSFESHSIASSIASSVASEHMISGIISPSDLPDSPGQTMPPSRSKTPPPPQTVQAKKDGSKPIVPDEERGKVAKTAVHSAIQRVQVLQEADTLLHFATESTPDGFSCASSLSALSLDEPYIQKDVQLKIMPPVLENDQGNKAEPEKEFIDNKAKKEDKRSEQEKDMLDDTDDDIDILEECIISAMPRKPSRKNKKVPQPTPGKPPPPVARKPSQLPVYKLLSSQNRLQTQKHVNFTHSDDMPRVYCVEGTPINFSTATSLSDLTIESPPSEPTNDQPNTDSLSTDLEKRDTIPTEGRSTDDTDASKPLNPTTVLDEDKAEEGDILAECIHSAMPKGKSHKPYRVKKIMDQINHTSAATSSGNSRSMQETDKNKPTSPVKPMPQSIGFKERLKKNTELKLNPNSENQYCDPRKPSSKKPSKVANEKIPNNEERTKGFAFDSPHHYTPIEGTPYCFSRNDSLSSLDFEDDDIDLSKEKAELRKEKGTKDTDQKVKYKHENRAINPMGKQDQTGPKSLGGRDQPKALVQKPTSFSSAAKGTQDRGGATDEKMENFAIENTPVCFSRNSSLSSLSDIDQENNNKETEPLKQTGTSETQLGLRRPQTSGYAPKSFHVEDTPVCFSRNSSLSSLSIDSEDDLLQECISSAMPKKRKPSKIKNEVGKSRSNSVGGILAEEPDLTLDLRDIQSPDSENAFSPDSENFDWKAIQEGANSIVSRLHQAAAAGSLSRQGSSDSDSILSLKSGISLGSPFHLTLDKEEKTITSNKGPKILKPAEKSALENKKTEEEPKGIKGGKKVYKSLITGKSRSSSDFSSHCKQSVQTNMPSISRGRTMIHIPGVRASSPSTSPVSKKGPVFKNVPSKGSNENPSSSSSPKGTKPLKSELVYGSRPSSTPGGSSKGNSRSGSRDSASSRPSPQPLSRPLQSPGRNSISPGKNGISPPNKFSQLPRTTSPSTASTKSSGSGRMSYTSPGRQLSQPNLSKQSGLPKTHSSIPRSESASKSLNQNVNTGSNKKVELSRMSSTKSSGSESDRSERPALVRQSTFIKEAPSPTLRRKLEESASFESLSSSSRADSPPRSQTQTPALSPSLPDMALSTHSIQAGGWRKMPPNLNPAAEHGDSRRRHDISRSHSESPSRLPITRSGTWKREHSKHSSSLPRVSTWRRTGSSSSILSASSESSEKAKSEDEKQQVCSFPGPRSECSSSAKGTWRKIKESEILETPSNGSSSTIAESNCSLESKTLVYQMAPAVSKTEDVWVRIEDCPINNPRSGRSPTGNSPPVIDNVLDQGQKEEAAKDCHTRHNSGNGNVPLLENRQKSFIKVDGLDTKGTDPKSLINNQQETNENTVAERTAFSSSSSSKHSSPSGTVAARVTPFNYNPSPRKSNGENSTSRPSQIPTPVTNSTKKRDSKTETTDSSGSQSPKRHSGSYLVTSV.

A coiled-coil region spans residues 4 to 58 (ASYDQLVKQVEALTMENTNLRQELEDNSNHLTKLETEATNMKEVLKQLQGSIEDE). Disordered stretches follow at residues 80-114 (SNIP…SPVP) and 240-300 (AEAA…NSTY). Residues 133 to 244 (YMEELEKERL…LQSQVAEAAE (112 aa)) are a coiled coil. A compositionally biased stretch (basic and acidic residues) spans 242-262 (AAERTPQSKHDAGSRDAEKLP). A compositionally biased stretch (polar residues) spans 291–300 (TSVMSSNSTY). ARM repeat units follow at residues 343–384 (QDSC…ARAS), 462–504 (EEHR…RYAG), 516–555 (ANKA…NLSW), 559–599 (VNSK…NLSA), 603–646 (ENKA…NVSS), 652–691 (EDHR…NLSA), and 694–733 (AKDQ…NLMA). The segment covering 833–842 (TVLPGSSSPR) has biased composition (polar residues). 14 disordered regions span residues 833-877 (TVLP…SKRI), 901-941 (QENR…TKAE), 963-988 (SLNS…SYSE), 1032-1260 (SDEQ…PSIN), 1278-1382 (RGSS…PEHY), 1424-1469 (IISP…EERG), 1533-1612 (LEND…RKPS), 1657-1718 (TSLS…EDKA), 1754-1842 (SAAT…SPHH), 1875-1950 (KAEL…KMEN), 1963-2012 (NSSL…FHVE), 2041-2069 (SSAM…GGIL), 2154-2627 (EEKT…TIAE), and 2686-2829 (KEEA…VTSV). Residues 848-857 (SRPEKDRERT) show a composition bias toward basic and acidic residues. Composition is skewed to polar residues over residues 863–877 (YHST…SKRI) and 923–941 (RKPS…TKAE). The segment covering 1034-1047 (EQLNSGRQSPTQNE) has biased composition (polar residues). The segment covering 1048-1067 (RWSRPKHIIDSEMKQSEQRQ) has biased composition (basic and acidic residues). 2 stretches are compositionally biased toward polar residues: residues 1068-1079 (PRTTKTTYSSYT) and 1106-1117 (RGANNQVDQSRV). A compositionally biased stretch (acidic residues) spans 1150 to 1159 (SEEEQQEDET). Over residues 1171 to 1188 (ASEEHHGEQPIDYSRKYS) the composition is skewed to basic and acidic residues. Residues 1190-1208 (DVPSSAQKPSFPYSNNSSK) are compositionally biased toward polar residues. Over residues 1217-1230 (SSNSNTPTPSPNSN) the composition is skewed to low complexity. Polar residues-rich tracts occupy residues 1231-1244 (RQNQ…QSRP), 1301-1310 (GQESNNTLQI), and 1340-1351 (NRLQTSNISPSD). The span at 1361 to 1372 (SSGAKSPSKSGA) shows a compositional bias: low complexity. 2 stretches are compositionally biased toward basic and acidic residues: residues 1454–1469 (AKKD…EERG) and 1537–1566 (QGNK…KDML). A coiled-coil region spans residues 1545 to 1578 (KEFIDNKAKKEDKRSEQEKDMLDDTDDDIDILEE). Over residues 1567 to 1577 (DDTDDDIDILE) the composition is skewed to acidic residues. A compositionally biased stretch (pro residues) spans 1597-1608 (QPTPGKPPPPVA). The span at 1671 to 1683 (PTNDQPNTDSLST) shows a compositional bias: polar residues. Residues 1684-1703 (DLEKRDTIPTEGRSTDDTDA) show a composition bias toward basic and acidic residues. Residues 1754–1765 (SAATSSGNSRSM) are compositionally biased toward polar residues. Composition is skewed to basic and acidic residues over residues 1786–1795 (FKERLKKNTE) and 1875–1898 (KAEL…HENR). Composition is skewed to polar residues over residues 1926-1935 (KPTSFSSAAK) and 1984-2003 (LKQT…QTSG). The span at 2168–2186 (KPAEKSALENKKTEEEPKG) shows a compositional bias: basic and acidic residues. Over residues 2199–2222 (TGKSRSSSDFSSHCKQSVQTNMPS) the composition is skewed to polar residues. 3 stretches are compositionally biased toward low complexity: residues 2256-2275 (PSKG…GTKP), 2283-2322 (GSRP…LQSP), and 2346-2359 (TTSP…SSGS). Composition is skewed to polar residues over residues 2360–2408 (GRMS…TGSN) and 2415–2424 (RMSSTKSSGS). Positions 2456–2474 (SASFESLSSSSRADSPPRS) are enriched in low complexity. Over residues 2549-2562 (SSSLPRVSTWRRTG) the composition is skewed to polar residues. Over residues 2563–2573 (SSSSILSASSE) the composition is skewed to low complexity. Positions 2574–2585 (SSEKAKSEDEKQ) are enriched in basic and acidic residues. Over residues 2616 to 2627 (TPSNGSSSTIAE) the composition is skewed to polar residues. The span at 2686–2695 (KEEAAKDCHT) shows a compositional bias: basic and acidic residues. The span at 2730–2743 (LINNQQETNENTVA) shows a compositional bias: polar residues. Positions 2749-2760 (SSSSSSKHSSPS) are enriched in low complexity. Residues 2770–2798 (FNYNPSPRKSNGENSTSRPSQIPTPVTNS) show a composition bias toward polar residues.

The protein belongs to the adenomatous polyposis coli (APC) family.

Its function is as follows. Promotes rapid degradation of CTNNB1 and participates in Wnt signaling as a negative regulator. The chain is Adenomatous polyposis coli homolog (apc) from Xenopus laevis (African clawed frog).